A 299-amino-acid polypeptide reads, in one-letter code: Protein bem46 (299 aa).

The helical transmembrane segment at tyrosine 15–tyrosine 32 threads the bilayer.

It belongs to the serine esterase family.

The protein resides in the membrane. Suppressor of bem1/bud5. This chain is Protein bem46 (bem46), found in Schizosaccharomyces pombe (strain 972 / ATCC 24843) (Fission yeast).